Reading from the N-terminus, the 906-residue chain is Catenin alpha-2 (906 aa).

The segment covering Lys866–Thr880 has biased composition (basic and acidic residues). Residues Lys866–Ser892 form a disordered region. Over residues Arg881 to Ile891 the composition is skewed to basic residues.

The protein belongs to the vinculin/alpha-catenin family. Interacts with CDH1 and CDH2. As to expression, mainly in the nervous system (at protein level).

It is found in the cell membrane. Its subcellular location is the cytoplasm. The protein resides in the cytoskeleton. The protein localises to the cell junction. It localises to the adherens junction. It is found in the cell projection. Its subcellular location is the axon. The protein resides in the nucleus. In terms of biological role, may function as a linker between cadherin adhesion receptors and the cytoskeleton to regulate cell-cell adhesion and differentiation in the nervous system. In Gallus gallus (Chicken), this protein is Catenin alpha-2 (CTNNA2).